A 160-amino-acid chain; its full sequence is M-phase phosphoprotein 6 (160 aa).

Glycyl lysine isopeptide (Lys-Gly) (interchain with G-Cter in SUMO2) cross-links involve residues lysine 37 and lysine 86. Serine 110 carries the phosphoserine modification. The short motif at 116–133 is the Nuclear localization signal element; the sequence is RRYETLVGTIGKKFARKR. Lysine 127 participates in a covalent cross-link: Glycyl lysine isopeptide (Lys-Gly) (interchain with G-Cter in SUMO2). Phosphothreonine is present on threonine 147. Glycyl lysine isopeptide (Lys-Gly) (interchain with G-Cter in SUMO2) cross-links involve residues lysine 150 and lysine 153.

This sequence belongs to the MPP6 family. As to quaternary structure, associates with the RNA exosome complex, mediated by EXOSC3. Interacts with ARHGAP18. Interacts with exosome cofactors EXOSC10 and MTREX. In terms of processing, phosphorylated in M (mitotic) phase.

The protein localises to the nucleus. It localises to the nucleolus. It is found in the cytoplasm. RNA-binding protein that associates with the RNA exosome complex. Involved in the 3'-processing of the 7S pre-RNA to the mature 5.8S rRNA and play a role in recruiting the RNA exosome complex to pre-rRNA; this function may include C1D. The chain is M-phase phosphoprotein 6 from Homo sapiens (Human).